The following is a 215-amino-acid chain: Cytochrome b6 (215 aa).

Residues 32–52 (IFYCLGGITLVCFLIQFATGF) traverse the membrane as a helical segment. Cys35 lines the heme c pocket. Residues His86 and His100 each contribute to the heme b site. The next 3 helical transmembrane spans lie at 90–110 (ASMM…TGGF), 116–136 (LTWV…VTGY), and 186–206 (AHTF…FLMI). Heme b-binding residues include His187 and His202.

This sequence belongs to the cytochrome b family. PetB subfamily. In terms of assembly, the 4 large subunits of the cytochrome b6-f complex are cytochrome b6, subunit IV (17 kDa polypeptide, PetD), cytochrome f and the Rieske protein, while the 4 small subunits are PetG, PetL, PetM and PetN. The complex functions as a dimer. Heme b is required as a cofactor. Heme c serves as cofactor.

It localises to the cellular thylakoid membrane. Component of the cytochrome b6-f complex, which mediates electron transfer between photosystem II (PSII) and photosystem I (PSI), cyclic electron flow around PSI, and state transitions. The chain is Cytochrome b6 from Trichormus variabilis (strain ATCC 29413 / PCC 7937) (Anabaena variabilis).